The chain runs to 1816 residues: Kinesin-like protein KIF1B (1816 aa).

Residue Ser-2 is modified to N-acetylserine. The Kinesin motor domain maps to 5 to 354; the sequence is SVKVAVRVRP…LRYADRAKQI (350 aa). An ATP-binding site is contributed by 97 to 104; that stretch reads GQTGAGKS. The interval 270–350 is interaction with KIFBP; that stretch reads NINKSLTTLG…TLSTLRYADR (81 aa). Residues 431-450 are disordered; that stretch reads FSTASMGSLTSSPSSCSLNS. The span at 432 to 450 shows a compositional bias: low complexity; it reads STASMGSLTSSPSSCSLNS. A coiled-coil region spans residues 470 to 512; that stretch reads GEEAIERLKESEKIIAELNETWEEKLRKTEAIRMEREALLAEM. The FHA domain occupies 556 to 612; the sequence is TRVGQADAERRQDIVLSGAHIKEEHCIFRSERNNTGEVIVTLEPCERSETYVNGKRV. 2 positions are modified to phosphothreonine: Thr-647 and Thr-652. The stretch at 672-731 forms a coiled coil; the sequence is IDMKQEMEKRLQEMEILYKREKEEADLLLEQQRLDYESKLQALQKQVETRSLAAETTEEE. A phosphoserine mark is found at Ser-1054, Ser-1057, Ser-1416, Ser-1454, and Ser-1487. The disordered stretch occupies residues 1550–1570; the sequence is STTTFESAITPSESSGYDSAD. 4 positions are modified to phosphoserine: Ser-1573, Ser-1603, Ser-1610, and Ser-1613. Low complexity predominate over residues 1620 to 1637; it reads SVSSFSSSTLTPSSTCPS. Positions 1620-1659 are disordered; that stretch reads SVSSFSSSTLTPSSTCPSLVDSRSSSMDQKTPEANSRASS. The span at 1640–1659 shows a compositional bias: polar residues; it reads DSRSSSMDQKTPEANSRASS. The region spanning 1701 to 1799 is the PH domain; that stretch reads VVSKKGYLHF…WLYAFNPLLA (99 aa).

This sequence belongs to the TRAFAC class myosin-kinesin ATPase superfamily. Kinesin family. Unc-104 subfamily. As to quaternary structure, monomer. Interacts with KIFBP; positively regulates KIF1B microtubule motor activity. Interacts (via C-terminus end of the kinesin-motor domain) with CHP1; the interaction occurs in a calcium-dependent manner. Interacts with MADD (via death domain); links this isoform of KIF1B to Rab3-carrying vesicles in anterograde synaptic vesicle transport. In terms of tissue distribution, expressed in the brain with lower expression in testis and liver (at protein level). Strongly expressed in the brain and ovary, with lower expression in lung, kidney, uterus, testis and liver. As to expression, isoform 2 is expressed in non-neuronal tissues.

The protein localises to the cytoplasm. Its subcellular location is the cytoskeleton. It is found in the cytoplasmic vesicle. The protein resides in the secretory vesicle. It localises to the synaptic vesicle membrane. The protein localises to the lysosome. It carries out the reaction ATP + H2O + a kinesin associated with a microtubule at position (n) = ADP + phosphate a kinesin associated with a microtubule at position (n+1, toward the plus end).. Has a plus-end-directed microtubule motor activity and functions as a motor for transport of vesicles and organelles along microtubules. In terms of biological role, has a plus-end-directed microtubule motor activity and functions as a motor for anterograde synaptic vesicle transport along axonal microtubules from the cell body to the presynapse in neuronal cells. Its function is as follows. Has a plus-end-directed microtubule motor activity and functions as a motor for the translocation of lysosomes from perinuclear regions to the cell periphery. The protein is Kinesin-like protein KIF1B of Rattus norvegicus (Rat).